A 258-amino-acid chain; its full sequence is UPF0246 protein YaaA (258 aa).

The protein belongs to the UPF0246 family.

In Escherichia coli (strain SE11), this protein is UPF0246 protein YaaA.